Here is a 941-residue protein sequence, read N- to C-terminus: MAEFEERPRLSIGEEEAPPYPLEKLTGGRRTRAQIHALHQQAGRVPPQAVELEQAVLGAMLIEPEAIPRALEILTPEAFYDGRHQRIFRAIVRLFEQNRGVDLLTVTEELRRTGELEQAGDTIYLSELTTRVASAANVEYHARIIAEKLLRRMIEVMTLLVGRAYDPAADAFELLDEVEAEIFRLSDVHLRKAARSMNEVVKETLERLEAIHGRPGGITGVPSGFHQLDALTGGWQRGDLIIIAARPSMGKTAFALSCRNAALHPHYGTGVAIFSLEMGAEQLAQRLLTAEAASMPRRPAPDGCATRTGVSWPARRPLSDAPIFIDDTPSLGVLELRAKCRRLKAEHDIGLVIVDYLQLMQASHMPRNANREQEIAQISRSLKALAKELNVPVVALSQLSRAVETRGGDKRPQLSDLRESGCLAGDTLITLADGRRVPIRELVSQQNFSVWALNPQTYRLERARVSRAFCTGIKPVYRLTTRLGRSIRATANHRFLTPQGWKRVDELQPGDYLALPRRIPTASTPTLTEAELALLGHLIGDGCTLPHHVIQYTSRDADLATLVAHLATKVFGSKVTPQIRKELRWYQVYLRAARPLAPGKRNPISDWLRDLGIFGLRSYEKKVPALLFCQTSEAIATFLRHLWATDGCIQMRRGKKPYPAVYYATSSYQLARDVQSLLLRLGINARLKTVAQGEKGRVQYHVKVSGREDLLRFVEKIGAVGARQRAALASVYDYLSVRTGNPNRDIIPVALWYELVREAMYQRGISHRQLHANLGMAYGGMTLFRQNLSRARALRLAEAAACPELRQLAQSDVYWDPIVSIEPDGVEEVFDLTVPGPHNFVANDIIAHNSIEQDADVVLFIYRPERYGITVDENGNPTEGIAEIIIGKQRNGPTGTVRLAFINQYARFENLTMYQPEPGTPLPETPDETILPSGPPDEAPF.

Residues 1–25 (MAEFEERPRLSIGEEEAPPYPLEKL) are disordered. Positions 214 to 484 (RPGGITGVPS…PVYRLTTRLG (271 aa)) constitute an SF4 helicase; first part domain. 245–252 (ARPSMGKT) lines the ATP pocket. Residues 534–683 (LLGHLIGDGC…VQSLLLRLGI (150 aa)) form the DOD-type homing endonuclease domain. Residues 646–915 (DGCIQMRRGK…ARFENLTMYQ (270 aa)) enclose the SF4 helicase; second part domain. A disordered region spans residues 914–941 (YQPEPGTPLPETPDETILPSGPPDEAPF).

This sequence belongs to the helicase family. DnaB subfamily. Homohexamer. Upon expression in E.coli this protein undergoes self splicing that involves a post-translational excision of the intervening region (intein) followed by peptide ligation.

The catalysed reaction is Couples ATP hydrolysis with the unwinding of duplex DNA at the replication fork by translocating in the 5'-3' direction. This creates two antiparallel DNA single strands (ssDNA). The leading ssDNA polymer is the template for DNA polymerase III holoenzyme which synthesizes a continuous strand.. It carries out the reaction ATP + H2O = ADP + phosphate + H(+). Its function is as follows. The main replicative DNA helicase, it participates in initiation and elongation during chromosome replication. Travels ahead of the DNA replisome, separating dsDNA into templates for DNA synthesis. A processive ATP-dependent 5'-3' DNA helicase it has DNA-dependent ATPase activity. In terms of biological role, the intein is an endonuclease. In Rhodothermus marinus (Rhodothermus obamensis), this protein is Replicative DNA helicase DnaB.